The following is a 137-amino-acid chain: Nucleoside diphosphate kinase (137 aa).

ATP is bound by residues K9, F58, R86, T92, R103, and N113. Catalysis depends on H121, which acts as the Pros-phosphohistidine intermediate.

Belongs to the NDK family. As to quaternary structure, homotetramer. Requires Mg(2+) as cofactor.

It is found in the cytoplasm. It carries out the reaction a 2'-deoxyribonucleoside 5'-diphosphate + ATP = a 2'-deoxyribonucleoside 5'-triphosphate + ADP. The enzyme catalyses a ribonucleoside 5'-diphosphate + ATP = a ribonucleoside 5'-triphosphate + ADP. In terms of biological role, major role in the synthesis of nucleoside triphosphates other than ATP. The ATP gamma phosphate is transferred to the NDP beta phosphate via a ping-pong mechanism, using a phosphorylated active-site intermediate. This is Nucleoside diphosphate kinase from Streptococcus pneumoniae (strain Hungary19A-6).